A 147-amino-acid polypeptide reads, in one-letter code: Ribosome maturation factor RimP (147 aa).

Belongs to the RimP family.

It is found in the cytoplasm. In terms of biological role, required for maturation of 30S ribosomal subunits. This is Ribosome maturation factor RimP from Thermosipho melanesiensis (strain DSM 12029 / CIP 104789 / BI429).